Here is a 350-residue protein sequence, read N- to C-terminus: UDP-N-acetylenolpyruvoylglucosamine reductase (350 aa).

One can recognise an FAD-binding PCMH-type domain in the interval 24-195 (HVEATARWLL…VAVEFNLPLL (172 aa)). Arg-172 is an active-site residue. Ser-245 functions as the Proton donor in the catalytic mechanism. Residue Glu-342 is part of the active site.

It belongs to the MurB family. Requires FAD as cofactor.

The protein resides in the cytoplasm. It carries out the reaction UDP-N-acetyl-alpha-D-muramate + NADP(+) = UDP-N-acetyl-3-O-(1-carboxyvinyl)-alpha-D-glucosamine + NADPH + H(+). It functions in the pathway cell wall biogenesis; peptidoglycan biosynthesis. Functionally, cell wall formation. In Xanthomonas axonopodis pv. citri (strain 306), this protein is UDP-N-acetylenolpyruvoylglucosamine reductase.